The sequence spans 513 residues: Probable G-protein coupled receptor Mth-like 9 (513 aa).

An N-terminal signal peptide occupies residues 1-19 (MVSPLIILLIIWLSVGAKS). Residues 20–207 (VEIASINHPC…NCERFQTGYR (188 aa)) lie on the Extracellular side of the membrane. Disulfide bonds link C29-C82, C84-C89, C93-C181, and C94-C107. N-linked (GlcNAc...) asparagine glycosylation is present at N36. 3 N-linked (GlcNAc...) asparagine glycosylation sites follow: N106, N125, and N165. The chain crosses the membrane as a helical span at residues 208-228 (VWIYAICSIIAIIINIFILSL). Over 229 to 242 (LGSVRDARKSHYGQ) the chain is Cytoplasmic. A helical membrane pass occupies residues 243 to 263 (LIIYYLLSMIVGYSLLVYLAL). The Extracellular segment spans residues 264–276 (KNPMKLSHVACRN). Residues 277 to 297 (IGFLAYFCIMLSFVFLAICSL) form a helical membrane-spanning segment. Residues 298–314 (DFLLKFKQKAVRSSVRR) are Cytoplasmic-facing. The helical transmembrane segment at 315 to 335 (LSLALAVLAVIGLRFLVSLAQ) threads the bilayer. At 336–360 (DSKLPKHFKPGMGEDYCWFDVRTWG) the chain is on the extracellular side. The chain crosses the membrane as a helical span at residues 361–381 (ILIYYYGPIALLLIFSIVCCL). Topologically, residues 382-403 (KAYFSIYELPPDTQYILGTQLK) are cytoplasmic. A helical transmembrane segment spans residues 404 to 424 (IVKTHFYAFSAYIVGVFAVWI). Residues 425–438 (REIVVYIMARVREH) are Extracellular-facing. Residues 439-459 (FFIIDFWSGICILGLAIAGFI) form a helical membrane-spanning segment. Topologically, residues 460-513 (LLLGKNLHVKSWWAINVESSQTDLSIINARVYKFDEKGDLKSSDSPYKPTVTSL) are cytoplasmic.

It belongs to the G-protein coupled receptor 2 family. Mth subfamily.

Its subcellular location is the cell membrane. This chain is Probable G-protein coupled receptor Mth-like 9 (mthl9), found in Drosophila melanogaster (Fruit fly).